Reading from the N-terminus, the 627-residue chain is Membrane protein insertase YidC (627 aa).

A run of 6 helical transmembrane segments spans residues 3–23 (KNTVIGLVLIGLVIFGFSWLN), 376–396 (WGLIILLLTLGIKLLISPLAY), 450–470 (LPMLLQFPFLIAMYMYFPTTI), 502–522 (FYGNHVSLFCLLMSISNILYI), 534–554 (EGMAMLKWMPYITTVMFLFFF), and 558–578 (ASGLCYYYFLSSIITVIQYMS).

It belongs to the OXA1/ALB3/YidC family. Type 1 subfamily. In terms of assembly, interacts with the Sec translocase complex via SecD. Specifically interacts with transmembrane segments of nascent integral membrane proteins during membrane integration.

Its subcellular location is the cell inner membrane. Required for the insertion and/or proper folding and/or complex formation of integral membrane proteins into the membrane. Involved in integration of membrane proteins that insert both dependently and independently of the Sec translocase complex, as well as at least some lipoproteins. Aids folding of multispanning membrane proteins. The sequence is that of Membrane protein insertase YidC from Porphyromonas gingivalis (strain ATCC 33277 / DSM 20709 / CIP 103683 / JCM 12257 / NCTC 11834 / 2561).